We begin with the raw amino-acid sequence, 214 residues long: Outer-membrane lipoprotein carrier protein (214 aa).

Positions 1 to 24 (MKIKLAFAVLLALCLSLSVMPVLA) are cleaved as a signal peptide.

The protein belongs to the LolA family. In terms of assembly, monomer.

The protein localises to the periplasm. In terms of biological role, participates in the translocation of lipoproteins from the inner membrane to the outer membrane. Only forms a complex with a lipoprotein if the residue after the N-terminal Cys is not an aspartate (The Asp acts as a targeting signal to indicate that the lipoprotein should stay in the inner membrane). The sequence is that of Outer-membrane lipoprotein carrier protein from Alkalilimnicola ehrlichii (strain ATCC BAA-1101 / DSM 17681 / MLHE-1).